Consider the following 138-residue polypeptide: MANDLVQARDNSQVFGVARIYASFNDTFVHVTDLSGKETIARVTGGMKVKADRDESSPYAAMLAAQDVAAKCKEVGITAVHVKIRATGGTRTKTPGPGGQAALRALARSGLRIGRIEDVTPVPSDSTRKKGGRRGRRL.

Residues 118–138 form a disordered region; the sequence is DVTPVPSDSTRKKGGRRGRRL. Over residues 129–138 the composition is skewed to basic residues; sequence KKGGRRGRRL.

This sequence belongs to the universal ribosomal protein uS11 family. Component of the small ribosomal subunit (SSU). Mature yeast ribosomes consist of a small (40S) and a large (60S) subunit. The 40S small subunit contains 1 molecule of ribosomal RNA (18S rRNA) and 33 different proteins (encoded by 57 genes). The large 60S subunit contains 3 rRNA molecules (25S, 5.8S and 5S rRNA) and 46 different proteins (encoded by 81 genes). uS11 interacts with eS1 forming part of the mRNA exit tunnel. uS11 interacts with snoRNA U3. uS11 interacts with MPP10. Component of the ribosomal small subunit (SSU) processome composed of at least 40 protein subunits and snoRNA U3.

The protein localises to the cytoplasm. It localises to the nucleus. The protein resides in the nucleolus. Functionally, component of the ribosome, a large ribonucleoprotein complex responsible for the synthesis of proteins in the cell. The small ribosomal subunit (SSU) binds messenger RNAs (mRNAs) and translates the encoded message by selecting cognate aminoacyl-transfer RNA (tRNA) molecules. The large subunit (LSU) contains the ribosomal catalytic site termed the peptidyl transferase center (PTC), which catalyzes the formation of peptide bonds, thereby polymerizing the amino acids delivered by tRNAs into a polypeptide chain. The nascent polypeptides leave the ribosome through a tunnel in the LSU and interact with protein factors that function in enzymatic processing, targeting, and the membrane insertion of nascent chains at the exit of the ribosomal tunnel. uS11 is involved in nucleolar processing of pre-18S ribosomal RNA and ribosome assembly. In Saccharomyces cerevisiae (strain ATCC 204508 / S288c) (Baker's yeast), this protein is Small ribosomal subunit protein uS11B.